The following is a 281-amino-acid chain: ATP phosphoribosyltransferase (281 aa).

This sequence belongs to the ATP phosphoribosyltransferase family. Long subfamily. It depends on Mg(2+) as a cofactor.

It localises to the cytoplasm. The enzyme catalyses 1-(5-phospho-beta-D-ribosyl)-ATP + diphosphate = 5-phospho-alpha-D-ribose 1-diphosphate + ATP. It functions in the pathway amino-acid biosynthesis; L-histidine biosynthesis; L-histidine from 5-phospho-alpha-D-ribose 1-diphosphate: step 1/9. Its activity is regulated as follows. Feedback inhibited by histidine. Its function is as follows. Catalyzes the condensation of ATP and 5-phosphoribose 1-diphosphate to form N'-(5'-phosphoribosyl)-ATP (PR-ATP). Has a crucial role in the pathway because the rate of histidine biosynthesis seems to be controlled primarily by regulation of HisG enzymatic activity. This chain is ATP phosphoribosyltransferase, found in Corynebacterium efficiens (strain DSM 44549 / YS-314 / AJ 12310 / JCM 11189 / NBRC 100395).